The primary structure comprises 111 residues: UPF0060 membrane protein CPR_1507 (111 aa).

Helical transmembrane passes span 7 to 27, 33 to 53, 60 to 80, and 85 to 105; these read IFYF…IWLW, SLIY…IPTL, FGRV…LCGW, and IIPD…VLII.

Belongs to the UPF0060 family.

The protein localises to the cell membrane. In Clostridium perfringens (strain SM101 / Type A), this protein is UPF0060 membrane protein CPR_1507.